We begin with the raw amino-acid sequence, 316 residues long: Ribosomal protein L11 methyltransferase (316 aa).

S-adenosyl-L-methionine is bound by residues threonine 157, glycine 178, aspartate 200, and asparagine 243.

It belongs to the methyltransferase superfamily. PrmA family.

Its subcellular location is the cytoplasm. It carries out the reaction L-lysyl-[protein] + 3 S-adenosyl-L-methionine = N(6),N(6),N(6)-trimethyl-L-lysyl-[protein] + 3 S-adenosyl-L-homocysteine + 3 H(+). Its function is as follows. Methylates ribosomal protein L11. The protein is Ribosomal protein L11 methyltransferase of Streptococcus pneumoniae serotype 4 (strain ATCC BAA-334 / TIGR4).